Reading from the N-terminus, the 401-residue chain is Mu-type opioid receptor (401 aa).

At 1-69 (MDSGAVPTNA…CPSAGSPSMI (69 aa)) the chain is on the extracellular side. 5 N-linked (GlcNAc...) asparagine glycosylation sites follow: N9, N12, N34, N41, and N49. A helical transmembrane segment spans residues 70-94 (TAIIIMALYSIVCVVGLFGNFLVMY). Topologically, residues 95 to 107 (VIVRYTKMKTATN) are cytoplasmic. Residues 108-132 (IYIFNLALADALATSTLPFQSVNYL) form a helical membrane-spanning segment. Residues 133–143 (MGTWPFGTILC) are Extracellular-facing. C143 and C220 are disulfide-bonded. A helical transmembrane segment spans residues 144–166 (KIVISIDYYNMFTSIFTLCTMSV). Residues 167-186 (DRYIAVCHPVKALDLRTPRN) are Cytoplasmic-facing. Y169 carries the phosphotyrosine modification. Residues 187–208 (AKIINICNWILSSAIGLPVMFM) traverse the membrane as a helical segment. The Extracellular portion of the chain corresponds to 209–231 (ATTKYRQGSIDCTLTFSHPTWYW). Residues 232–256 (ENLLKICVFIFAFIMPILIITVCYG) traverse the membrane as a helical segment. At 257 to 280 (LMILRLKSVRMLSGSKEKDRNLRR) the chain is on the cytoplasmic side. A helical transmembrane segment spans residues 281–307 (ITRMVLVVVAVFIVCWTPIHIYVIIKA). Residues 308-315 (LITIPETT) lie on the Extracellular side of the membrane. A helical transmembrane segment spans residues 316–339 (FQTVSWHFCIALGYTNSCLNPVLY). The NPxxY; plays a role in stabilizing the activated conformation of the receptor motif lies at 335 to 339 (NPVLY). Residues 340-401 (AFLDENFKRC…NLEAETTPLP (62 aa)) lie on the Cytoplasmic side of the membrane. A lipid anchor (S-palmitoyl cysteine) is attached at C354. The segment at 365–389 (NSTRIRQNTRDHPSTANTVDRTNHQ) is disordered. S366 bears the Phosphoserine mark. A Phosphothreonine modification is found at T373. Phosphoserine is present on S378. Phosphothreonine is present on T397.

Belongs to the G-protein coupled receptor 1 family. In terms of assembly, forms homooligomers and heterooligomers with other GPCRs, such as OPRD1, OPRK1, OPRL1, NPFFR2, ADRA2A, SSTR2, CNR1 and CCR5 (probably in dimeric forms). Interacts with heterotrimeric G proteins; interaction with a heterotrimeric complex containing GNAI1, GNB1 and GNG2 stabilizes the active conformation of the receptor and increases its affinity for endomorphin-2, the synthetic opioid peptide DAMGO and for morphinan agonists. Interacts with PPL; the interaction disrupts agonist-mediated G-protein activation. Interacts (via C-terminus) with DNAJB4 (via C-terminus). Interacts with calmodulin; the interaction inhibits the constitutive activity of OPRM1; it abolishes basal and attenuates agonist-stimulated G-protein coupling. Interacts with FLNA, PLD2, RANBP9 and WLS and GPM6A. Interacts with RTP4. Interacts with SYP and GNAS. Interacts with RGS9, RGS17, RGS20, RGS4, PPP1R9B and HINT1. Post-translationally, phosphorylated. Differentially phosphorylated in basal and agonist-induced conditions. Agonist-mediated phosphorylation modulates receptor internalization. Phosphorylated by GRK2 in a agonist-dependent manner. Phosphorylation at Tyr-169 requires receptor activation, is dependent on non-receptor protein tyrosine kinase Src and results in a decrease in agonist efficacy by reducing G-protein coupling efficiency. Phosphorylated on tyrosine residues; the phosphorylation is involved in agonist-induced G-protein-independent receptor down-regulation. Phosphorylation at Ser-378 is involved in G-protein-dependent but not beta-arrestin-dependent activation of the ERK pathway. In terms of processing, ubiquitinated. A basal ubiquitination seems not to be related to degradation. Ubiquitination is increased upon formation of OPRM1:OPRD1 oligomers leading to proteasomal degradation; the ubiquitination is diminished by RTP4.

Its subcellular location is the cell membrane. The protein localises to the cell projection. It localises to the axon. The protein resides in the perikaryon. It is found in the dendrite. Its subcellular location is the endosome. Receptor for endogenous opioids such as beta-endorphin and endomorphin. Receptor for natural and synthetic opioids including morphine, heroin, DAMGO, fentanyl, etorphine, buprenorphin and methadone. Also activated by enkephalin peptides, such as Met-enkephalin or Met-enkephalin-Arg-Phe, with higher affinity for Met-enkephalin-Arg-Phe. Agonist binding to the receptor induces coupling to an inactive GDP-bound heterotrimeric G-protein complex and subsequent exchange of GDP for GTP in the G-protein alpha subunit leading to dissociation of the G-protein complex with the free GTP-bound G-protein alpha and the G-protein beta-gamma dimer activating downstream cellular effectors. The agonist- and cell type-specific activity is predominantly coupled to pertussis toxin-sensitive G(i) and G(o) G alpha proteins, GNAI1, GNAI2, GNAI3 and GNAO1, and to a lesser extent to pertussis toxin-insensitive G alpha proteins GNAZ and GNA15. They mediate an array of downstream cellular responses, including inhibition of adenylate cyclase activity and both N-type and L-type calcium channels, activation of inward rectifying potassium channels, mitogen-activated protein kinase (MAPK), phospholipase C (PLC), phosphoinositide/protein kinase (PKC), phosphoinositide 3-kinase (PI3K) and regulation of NF-kappa-B. Also couples to adenylate cyclase stimulatory G alpha proteins. The selective temporal coupling to G-proteins and subsequent signaling can be regulated by RGSZ proteins, such as RGS9, RGS17 and RGS4. Phosphorylation by members of the GPRK subfamily of Ser/Thr protein kinases and association with beta-arrestins is involved in short-term receptor desensitization. Beta-arrestins associate with the GPRK-phosphorylated receptor and uncouple it from the G-protein thus terminating signal transduction. The phosphorylated receptor is internalized through endocytosis via clathrin-coated pits which involves beta-arrestins. The activation of the ERK pathway occurs either in a G-protein-dependent or a beta-arrestin-dependent manner and is regulated by agonist-specific receptor phosphorylation. Acts as a class A G-protein coupled receptor (GPCR) which dissociates from beta-arrestin at or near the plasma membrane and undergoes rapid recycling. Receptor down-regulation pathways are varying with the agonist and occur dependent or independent of G-protein coupling. Endogenous ligands induce rapid desensitization, endocytosis and recycling. Heterooligomerization with other GPCRs can modulate agonist binding, signaling and trafficking properties. Involved in neurogenesis. This Bos taurus (Bovine) protein is Mu-type opioid receptor (OPRM1).